The sequence spans 135 residues: Large ribosomal subunit protein bL17 (135 aa).

The protein belongs to the bacterial ribosomal protein bL17 family. As to quaternary structure, part of the 50S ribosomal subunit. Contacts protein L32.

The sequence is that of Large ribosomal subunit protein bL17 from Rhodopseudomonas palustris (strain BisB18).